A 224-amino-acid polypeptide reads, in one-letter code: ATP phosphoribosyltransferase (224 aa).

The protein belongs to the ATP phosphoribosyltransferase family. Short subfamily. As to quaternary structure, heteromultimer composed of HisG and HisZ subunits.

The protein localises to the cytoplasm. The catalysed reaction is 1-(5-phospho-beta-D-ribosyl)-ATP + diphosphate = 5-phospho-alpha-D-ribose 1-diphosphate + ATP. It functions in the pathway amino-acid biosynthesis; L-histidine biosynthesis; L-histidine from 5-phospho-alpha-D-ribose 1-diphosphate: step 1/9. Catalyzes the condensation of ATP and 5-phosphoribose 1-diphosphate to form N'-(5'-phosphoribosyl)-ATP (PR-ATP). Has a crucial role in the pathway because the rate of histidine biosynthesis seems to be controlled primarily by regulation of HisG enzymatic activity. This Cupriavidus pinatubonensis (strain JMP 134 / LMG 1197) (Cupriavidus necator (strain JMP 134)) protein is ATP phosphoribosyltransferase.